Consider the following 121-residue polypeptide: Small ribosomal subunit protein uS13 (121 aa).

The interval 97–121 is disordered; that stretch reads VRGQRTRTNARTRRGARKTVAGKKK. The segment covering 100 to 121 has biased composition (basic residues); sequence QRTRTNARTRRGARKTVAGKKK.

The protein belongs to the universal ribosomal protein uS13 family. As to quaternary structure, part of the 30S ribosomal subunit. Forms a loose heterodimer with protein S19. Forms two bridges to the 50S subunit in the 70S ribosome.

In terms of biological role, located at the top of the head of the 30S subunit, it contacts several helices of the 16S rRNA. In the 70S ribosome it contacts the 23S rRNA (bridge B1a) and protein L5 of the 50S subunit (bridge B1b), connecting the 2 subunits; these bridges are implicated in subunit movement. Contacts the tRNAs in the A and P-sites. The protein is Small ribosomal subunit protein uS13 of Synechococcus sp. (strain CC9605).